The chain runs to 419 residues: RING finger protein 150 (419 aa).

Positions 1 to 34 (MALSVIQACRSLALSTWLLSFCFVHLLCLDFTVA) are cleaved as a signal peptide. Residues 35 to 197 (EKEEWYTAFV…NLQKYVSRTS (163 aa)) are Extracellular-facing. The PA domain occupies 70–172 (SLKREARGVL…PKGRELVLLM (103 aa)). The chain crosses the membrane as a helical span at residues 198 to 218 (VVFVSISFIILMIISLAWLVF). Residues 219–419 (YYIQRFRYAN…IDTPTDDPKC (201 aa)) are Cytoplasmic-facing. The RING-type; atypical zinc-finger motif lies at 267-308 (CAVCIEGYKPNDVVRILPCRHLFHKCCVDPWLVDHRTCPMCK). The segment at 374-419 (SEPLSQDTMPTEQSELQPIASGSSDVSLTTGAGHSDIDTPTDDPKC) is disordered. The segment covering 376-405 (PLSQDTMPTEQSELQPIASGSSDVSLTTGA) has biased composition (polar residues).

Its subcellular location is the membrane. The protein is RING finger protein 150 (rnf150) of Danio rerio (Zebrafish).